Consider the following 97-residue polypeptide: UPF0298 protein MGAS9429_Spy0329 (97 aa).

The protein belongs to the UPF0298 family.

Its subcellular location is the cytoplasm. This chain is UPF0298 protein MGAS9429_Spy0329, found in Streptococcus pyogenes serotype M12 (strain MGAS9429).